Consider the following 167-residue polypeptide: Ribosome-binding factor A (167 aa).

A disordered region spans residues 122 to 167; it reads LAASAKHAGEADPYKGDSPEDIDEDDFDEEDTDLSGDNDLDEDANR. The span at 128–139 shows a compositional bias: basic and acidic residues; sequence HAGEADPYKGDS. Positions 140–167 are enriched in acidic residues; sequence PEDIDEDDFDEEDTDLSGDNDLDEDANR.

This sequence belongs to the RbfA family. Monomer. Binds 30S ribosomal subunits, but not 50S ribosomal subunits or 70S ribosomes.

It is found in the cytoplasm. Its function is as follows. One of several proteins that assist in the late maturation steps of the functional core of the 30S ribosomal subunit. Associates with free 30S ribosomal subunits (but not with 30S subunits that are part of 70S ribosomes or polysomes). Required for efficient processing of 16S rRNA. May interact with the 5'-terminal helix region of 16S rRNA. This Paenarthrobacter aurescens (strain TC1) protein is Ribosome-binding factor A.